The primary structure comprises 873 residues: F-BAR domain only protein 1 (873 aa).

One can recognise an F-BAR domain in the interval 1 to 248 (MSYFGEHFWG…NVENVTVDML (248 aa)). The interval 1–275 (MSYFGEHFWG…LDFDAYSSAA (275 aa)) is mediates membrane-binding. The interval 153 to 172 (RENTSQKEMDKAETKSKKAA) is disordered. Residues 155–178 (NTSQKEMDKAETKSKKAADSLRRS) are a coiled coil. The mediates interaction with the adaptor protein complex AP-2 stretch occupies residues 267-439 (DFDAYSSAAL…KSLFGPPLES (173 aa)). Phosphoserine is present on residues Ser-295, Ser-343, and Ser-368. Residues 302–347 (SVDFLESDSGVPPEVDDEGFTVRPDISQNNGAEPPRFSSSDSDFDD) are disordered. Disordered regions lie at residues 381-600 (GSLI…RGPS) and 813-833 (SGHL…SPVA). Over residues 447-466 (TGSSSLGFTSSPSPFSSSSP) the composition is skewed to low complexity. Ser-518 carries the phosphoserine modification. Residues 567 to 576 (SLSPSPLGSS) are compositionally biased toward low complexity. Positions 593 to 873 (HGISRGPSPV…FATGMYLVSC (281 aa)) are mediates interaction with AGFG1, CALM, DAB2, EPS15, EPS15R, ITSN1 and clathrin. Phosphoserine is present on Ser-600. The MHD domain occupies 609 to 872 (ALPVATAFTE…RFATGMYLVS (264 aa)). Polar residues predominate over residues 816 to 827 (LSASWQPQSGPS).

Belongs to the FCHO family. In terms of assembly, may oligomerize and form homotetramer. Interacts with AP2A2 and AP2B1; 2 subunits of the adaptor protein complex AP-2. Interacts with DAB2. Interacts with clathrin (CLTC or CLTCL1). Interacts with EPS15, EPS15R and ITSN1. Interacts with AGFG1 and CALM. May interact with ACVR1; linking this receptor to clathrin-mediated endocytosis. As to expression, mainly detected in brain and spleen.

It localises to the membrane. The protein resides in the clathrin-coated pit. Functionally, functions in an early step of clathrin-mediated endocytosis. Has both a membrane binding/bending activity and the ability to recruit proteins essential to the formation of functional clathrin-coated pits. May regulate Bmp signaling by regulating clathrin-mediated endocytosis of Bmp receptors. Involved in the regulation of T-cell poliferation and activation. Affects TCR clustering upon receptor triggering and modulates its internalisation, playing a role in TCR-dependent T-cell activation. The sequence is that of F-BAR domain only protein 1 from Mus musculus (Mouse).